Reading from the N-terminus, the 210-residue chain is MRRKPIIIGVTGGSGGGKTSVSRAILDSFPNARIAMIQHDSYYKDQAHLSFEERVKTNYDHPLAFDTDFMIEQLKELLKGRPVDIPVYDYKAHTRSDKTFRQEPQDVIIVEGILVLEDERLRDLMDIKLFVDTDDDIRIIRRIKRDMMERGRSLDSIIEQYTTVVKPMYHQFIEPSKRYADIIVPEGVSNVVAIDLINTKIASILAEIDR.

12 to 19 contributes to the ATP binding site; sequence GGSGGGKT.

It belongs to the uridine kinase family.

Its subcellular location is the cytoplasm. It catalyses the reaction uridine + ATP = UMP + ADP + H(+). The catalysed reaction is cytidine + ATP = CMP + ADP + H(+). It functions in the pathway pyrimidine metabolism; CTP biosynthesis via salvage pathway; CTP from cytidine: step 1/3. Its pathway is pyrimidine metabolism; UMP biosynthesis via salvage pathway; UMP from uridine: step 1/1. The protein is Uridine kinase of Streptococcus uberis (strain ATCC BAA-854 / 0140J).